The following is a 371-amino-acid chain: 4-hydroxy-3-methylbut-2-en-1-yl diphosphate synthase (flavodoxin) (371 aa).

Positions 272, 275, 307, and 314 each coordinate [4Fe-4S] cluster.

Belongs to the IspG family. [4Fe-4S] cluster is required as a cofactor.

The enzyme catalyses (2E)-4-hydroxy-3-methylbut-2-enyl diphosphate + oxidized [flavodoxin] + H2O + 2 H(+) = 2-C-methyl-D-erythritol 2,4-cyclic diphosphate + reduced [flavodoxin]. It participates in isoprenoid biosynthesis; isopentenyl diphosphate biosynthesis via DXP pathway; isopentenyl diphosphate from 1-deoxy-D-xylulose 5-phosphate: step 5/6. In terms of biological role, converts 2C-methyl-D-erythritol 2,4-cyclodiphosphate (ME-2,4cPP) into 1-hydroxy-2-methyl-2-(E)-butenyl 4-diphosphate. The polypeptide is 4-hydroxy-3-methylbut-2-en-1-yl diphosphate synthase (flavodoxin) (Magnetococcus marinus (strain ATCC BAA-1437 / JCM 17883 / MC-1)).